Here is a 265-residue protein sequence, read N- to C-terminus: Asparagine-rich protein (265 aa).

The signal sequence occupies residues 1–21; the sequence is MSRLTLLVLLVIAAVIQKVHG. 2 disordered regions span residues 20–71 and 88–183; these read HGQG…NRNI and SNQN…NQQY. 2 stretches are compositionally biased toward basic and acidic residues: residues 22–35 and 44–55; these read QGRE…HEPG and EKTERNLREPNR. Low complexity predominate over residues 88 to 98; that stretch reads SNQNNFGNNRS. The segment covering 115–124 has biased composition (basic and acidic residues); it reads NKSEVEKENG. Basic residues predominate over residues 152–166; that stretch reads KVQHRIAKRFQKRHP.

In terms of tissue distribution, nacreous layer of shell (at protein level). Expressed primarily in the mantle with highest level in the mantle pallium and lower level in the mantle edge.

It is found in the secreted. The protein is Asparagine-rich protein of Pinctada maxima (Silver-lipped pearl oyster).